We begin with the raw amino-acid sequence, 717 residues long: Methionine--tRNA ligase (717 aa).

Residues 19–29 carry the 'HIGH' region motif; it reads PYANGDLHVGH. Cys-150, Cys-153, Cys-162, and Cys-166 together coordinate Zn(2+). Positions 356–360 match the 'KMSKS' region motif; the sequence is ALSTS. Thr-359 is an ATP binding site. Positions 573-603 are disordered; the sequence is ERVEEASEASAEASNEGGEAAGDEVDDGDVD. Residues 580–590 show a composition bias toward low complexity; it reads EASAEASNEGG. Acidic residues predominate over residues 593–603; it reads AGDEVDDGDVD. The region spanning 619–717 is the tRNA-binding domain; sequence DFEGVDMRVG…EDAPLGTRIK (99 aa).

This sequence belongs to the class-I aminoacyl-tRNA synthetase family. MetG type 1 subfamily. As to quaternary structure, homodimer. The cofactor is Zn(2+).

The protein localises to the cytoplasm. It carries out the reaction tRNA(Met) + L-methionine + ATP = L-methionyl-tRNA(Met) + AMP + diphosphate. In terms of biological role, is required not only for elongation of protein synthesis but also for the initiation of all mRNA translation through initiator tRNA(fMet) aminoacylation. The polypeptide is Methionine--tRNA ligase (Haloarcula marismortui (strain ATCC 43049 / DSM 3752 / JCM 8966 / VKM B-1809) (Halobacterium marismortui)).